The chain runs to 245 residues: 1-(5-phosphoribosyl)-5-[(5-phosphoribosylamino)methylideneamino] imidazole-4-carboxamide isomerase (245 aa).

Residue D8 is the Proton acceptor of the active site. Catalysis depends on D129, which acts as the Proton donor.

This sequence belongs to the HisA/HisF family.

The protein localises to the cytoplasm. It carries out the reaction 1-(5-phospho-beta-D-ribosyl)-5-[(5-phospho-beta-D-ribosylamino)methylideneamino]imidazole-4-carboxamide = 5-[(5-phospho-1-deoxy-D-ribulos-1-ylimino)methylamino]-1-(5-phospho-beta-D-ribosyl)imidazole-4-carboxamide. Its pathway is amino-acid biosynthesis; L-histidine biosynthesis; L-histidine from 5-phospho-alpha-D-ribose 1-diphosphate: step 4/9. This chain is 1-(5-phosphoribosyl)-5-[(5-phosphoribosylamino)methylideneamino] imidazole-4-carboxamide isomerase, found in Geotalea daltonii (strain DSM 22248 / JCM 15807 / FRC-32) (Geobacter daltonii).